Here is a 272-residue protein sequence, read N- to C-terminus: Cyclase-like protein 2 (272 aa).

A signal peptide spans 1–24; sequence MAVPPLFFLLTLLSLPSLLISAGA.

This sequence belongs to the Cyclase 1 superfamily.

Its subcellular location is the secreted. The protein localises to the extracellular space. The protein resides in the extracellular matrix. May function redundantly with CYCLASE1 for normal plant growth, development and viability. The sequence is that of Cyclase-like protein 2 from Arabidopsis thaliana (Mouse-ear cress).